A 123-amino-acid chain; its full sequence is Large ribosomal subunit protein uL14c (123 aa).

The protein belongs to the universal ribosomal protein uL14 family. Part of the 50S ribosomal subunit.

It localises to the plastid. Its subcellular location is the chloroplast. Functionally, binds to 23S rRNA. In Sorghum bicolor (Sorghum), this protein is Large ribosomal subunit protein uL14c.